Here is a 458-residue protein sequence, read N- to C-terminus: ATP synthase subunit beta (458 aa).

Position 148–155 (148–155 (GGAGVGKT)) interacts with ATP.

Belongs to the ATPase alpha/beta chains family. F-type ATPases have 2 components, CF(1) - the catalytic core - and CF(0) - the membrane proton channel. CF(1) has five subunits: alpha(3), beta(3), gamma(1), delta(1), epsilon(1). CF(0) has three main subunits: a(1), b(2) and c(9-12). The alpha and beta chains form an alternating ring which encloses part of the gamma chain. CF(1) is attached to CF(0) by a central stalk formed by the gamma and epsilon chains, while a peripheral stalk is formed by the delta and b chains.

The protein resides in the cell inner membrane. The enzyme catalyses ATP + H2O + 4 H(+)(in) = ADP + phosphate + 5 H(+)(out). Produces ATP from ADP in the presence of a proton gradient across the membrane. The catalytic sites are hosted primarily by the beta subunits. This chain is ATP synthase subunit beta, found in Halorhodospira halophila (strain DSM 244 / SL1) (Ectothiorhodospira halophila (strain DSM 244 / SL1)).